We begin with the raw amino-acid sequence, 496 residues long: Probable cytosol aminopeptidase (496 aa).

2 residues coordinate Mn(2+): K266 and D271. K278 is an active-site residue. Mn(2+) contacts are provided by D289, D348, and E350. R352 is an active-site residue.

The protein belongs to the peptidase M17 family. Mn(2+) is required as a cofactor.

The protein localises to the cytoplasm. The enzyme catalyses Release of an N-terminal amino acid, Xaa-|-Yaa-, in which Xaa is preferably Leu, but may be other amino acids including Pro although not Arg or Lys, and Yaa may be Pro. Amino acid amides and methyl esters are also readily hydrolyzed, but rates on arylamides are exceedingly low.. It carries out the reaction Release of an N-terminal amino acid, preferentially leucine, but not glutamic or aspartic acids.. Presumably involved in the processing and regular turnover of intracellular proteins. Catalyzes the removal of unsubstituted N-terminal amino acids from various peptides. The sequence is that of Probable cytosol aminopeptidase from Stutzerimonas stutzeri (strain A1501) (Pseudomonas stutzeri).